A 206-amino-acid polypeptide reads, in one-letter code: Protein GrpE (206 aa).

Basic and acidic residues predominate over residues 1-17 (MSNESIKAEQDLIHEGV). A disordered region spans residues 1–20 (MSNESIKAEQDLIHEGVESE).

This sequence belongs to the GrpE family. Homodimer.

It localises to the cytoplasm. Functionally, participates actively in the response to hyperosmotic and heat shock by preventing the aggregation of stress-denatured proteins, in association with DnaK and GrpE. It is the nucleotide exchange factor for DnaK and may function as a thermosensor. Unfolded proteins bind initially to DnaJ; upon interaction with the DnaJ-bound protein, DnaK hydrolyzes its bound ATP, resulting in the formation of a stable complex. GrpE releases ADP from DnaK; ATP binding to DnaK triggers the release of the substrate protein, thus completing the reaction cycle. Several rounds of ATP-dependent interactions between DnaJ, DnaK and GrpE are required for fully efficient folding. The sequence is that of Protein GrpE from Shewanella oneidensis (strain ATCC 700550 / JCM 31522 / CIP 106686 / LMG 19005 / NCIMB 14063 / MR-1).